The chain runs to 813 residues: ATP-dependent zinc metalloprotease FTSH 10, mitochondrial (813 aa).

The transit peptide at 1–86 directs the protein to the mitochondrion; the sequence is MIFSKLGSSL…FANPRLRRFF (86 aa). Residues 93-129 form a disordered region; the sequence is KKNYENYYPKDSKKAPKNEQKSESRDGSKKNENENAG. Residues 94-125 are compositionally biased toward basic and acidic residues; that stretch reads KNYENYYPKDSKKAPKNEQKSESRDGSKKNEN. A helical membrane pass occupies residues 139–157; that stretch reads MLIPLMAIALILSTFSLGS. 367-374 is an ATP binding site; the sequence is GPPGTGKT. His592 lines the Zn(2+) pocket. Glu593 is a catalytic residue. 2 residues coordinate Zn(2+): His596 and Asp668. Over residues 764-790 the composition is skewed to basic and acidic residues; sequence RPFKSGETTNYDRFKSGFEESEKESQK. The disordered stretch occupies residues 764 to 813; that stretch reads RPFKSGETTNYDRFKSGFEESEKESQKESVPVKPVEDDGIPPLEPQVVPT.

The protein in the N-terminal section; belongs to the AAA ATPase family. It in the C-terminal section; belongs to the peptidase M41 family. It depends on Zn(2+) as a cofactor.

The protein localises to the mitochondrion inner membrane. Probable ATP-dependent zinc metallopeptidase. Involved in the assembly and/or stability of the complexes I and V of the mitochondrial oxidative phosphorylation system. The polypeptide is ATP-dependent zinc metalloprotease FTSH 10, mitochondrial (FTSH10) (Arabidopsis thaliana (Mouse-ear cress)).